The following is an 831-amino-acid chain: Intraflagellar transport protein 88 (831 aa).

11 TPR repeats span residues 68–101 (IFKLLRDGMSAASCKDYVTALGRIREAIKLEQKV), 120–153 (TCIWMHWAQIQALGGQPEMALSTYEKIVKTAEGA), 156–189 (AQIRFNMGNINHNLGKYNEALKNFRMAIDQASPS), 248–281 (FDPLYTVLIGYYALGVPEKMIDAYSRLIDSSILI), 492–525 (RGVHTNIAFIYYLKGDYEASARHAQIALEIDPYD), 526–559 (SFAHINLGCTYSKTNQWELSLREFLKAQEINMES), 560–593 (VQATYNAGLVYFKQQEYKTAYSCFQKVASKLPSY), 595–627 (DAIYMSADCLARMSQIDEAIQMLSNLVTMFSAV), 632–665 (PSIYIRLGELYSIAGDEGQAAHYFKEAHRLVPFS), 666–699 (LAVINWLGSHYIKNELYEQARVCFEKASRVDTTT), and 700–733 (PKWSLAVAACLRKSKQYRDAIYEYKHILKRFPTN). A disordered region spans residues 785 to 816 (RRNSVAAVGPGSRAGQDRFEASNNRVSSNTGD). Over residues 805 to 815 (ASNNRVSSNTG) the composition is skewed to polar residues.

It localises to the cell projection. The protein localises to the cilium. Its subcellular location is the flagellum. It is found in the cytoplasm. The protein resides in the cytoskeleton. It localises to the flagellum axoneme. The protein localises to the flagellum basal body. Component of the intraflagellar transport complex B (IFT-B) involved in flagellar assembly. The sequence is that of Intraflagellar transport protein 88 from Giardia intestinalis (strain ATCC 50803 / WB clone C6) (Giardia lamblia).